We begin with the raw amino-acid sequence, 351 residues long: Photosystem II D2 protein (351 aa).

The chain crosses the membrane as a helical span at residues 39 to 59 (CAFLALGGWLTGTTFVTSWYT). His-116 serves as a coordination point for chlorophyll a. A helical membrane pass occupies residues 123–139 (GFMLRQFEIARLVGIRP). Pheophytin a is bound by residues Gln-128 and Asn-141. A helical membrane pass occupies residues 151–164 (VFVSVFLMYPLGQS). Residue His-196 participates in chlorophyll a binding. A helical membrane pass occupies residues 206-226 (GALLCAIHGATVENTLFEDGD). The a plastoquinone site is built by His-213 and Phe-260. Position 213 (His-213) interacts with Fe cation. His-267 contributes to the Fe cation binding site. The chain crosses the membrane as a helical span at residues 277–293 (GLWMSAVGIVGLALNLR).

Belongs to the reaction center PufL/M/PsbA/D family. As to quaternary structure, PSII is composed of 1 copy each of membrane proteins PsbA, PsbB, PsbC, PsbD, PsbE, PsbF, PsbH, PsbI, PsbJ, PsbK, PsbL, PsbM, PsbT, PsbX, PsbY, PsbZ, Psb30/Ycf12, peripheral proteins PsbO, CyanoQ (PsbQ), PsbU, PsbV and a large number of cofactors. It forms dimeric complexes. Requires The D1/D2 heterodimer binds P680, chlorophylls that are the primary electron donor of PSII, and subsequent electron acceptors. It shares a non-heme iron and each subunit binds pheophytin, quinone, additional chlorophylls, carotenoids and lipids. There is also a Cl(-1) ion associated with D1 and D2, which is required for oxygen evolution. The PSII complex binds additional chlorophylls, carotenoids and specific lipids. as cofactor.

The protein resides in the cellular thylakoid membrane. It carries out the reaction 2 a plastoquinone + 4 hnu + 2 H2O = 2 a plastoquinol + O2. In terms of biological role, photosystem II (PSII) is a light-driven water:plastoquinone oxidoreductase that uses light energy to abstract electrons from H(2)O, generating O(2) and a proton gradient subsequently used for ATP formation. It consists of a core antenna complex that captures photons, and an electron transfer chain that converts photonic excitation into a charge separation. The D1/D2 (PsbA/PsbD) reaction center heterodimer binds P680, the primary electron donor of PSII as well as several subsequent electron acceptors. D2 is needed for assembly of a stable PSII complex. This chain is Photosystem II D2 protein, found in Nostoc punctiforme (strain ATCC 29133 / PCC 73102).